The sequence spans 749 residues: Protein lin-54 homolog (749 aa).

A Glycyl lysine isopeptide (Lys-Gly) (interchain with G-Cter in SUMO2) cross-link involves residue Lys139. Residues Lys244 and Lys249 each carry the N6-acetyllysine modification. Phosphoserine occurs at positions 264, 282, 310, and 314. A Glycyl lysine isopeptide (Lys-Gly) (interchain with G-Cter in SUMO2) cross-link involves residue Lys357. Residues 521–634 (PRKPCNCTKS…KCIGCKNFEE (114 aa)) form the CRC domain. Residues 523 to 536 (KPCNCTKSLCLKLY) form a DNA-binding region. Zn(2+)-binding residues include Cys525, Cys527, Cys532, Cys537, Cys539, Cys546, Cys549, Cys551, and Cys554. Residues 583–596 (IGKGKEGESDRRHS) form a linker region. Zn(2+)-binding residues include Cys599, Cys601, Cys606, Cys611, Cys613, Cys620, Cys624, Cys626, and Cys629. Residues 599–612 (CNCKRSGCLKNYCE) are DNA-binding. Ser635 bears the Phosphoserine mark. Glycyl lysine isopeptide (Lys-Gly) (interchain with G-Cter in SUMO2) cross-links involve residues Lys639, Lys659, and Lys661.

Belongs to the lin-54 family. As to quaternary structure, component of the DREAM complex (also named LINC complex) at least composed of E2F4, E2F5, LIN9, LIN37, LIN52, LIN54, MYBL1, MYBL2, RBL1, RBL2, RBBP4, RBL2, TFDP1 and TFDP2. The complex exists in quiescent cells where it represses cell cycle-dependent genes. It dissociates in S phase when LIN9, LIN37, LIN52 and LIN54 form a subcomplex that binds to MYBL2.

Its subcellular location is the nucleus. Its function is as follows. Component of the DREAM complex, a multiprotein complex that can both act as a transcription activator or repressor depending on the context. In G0 phase, the complex binds to more than 800 promoters and is required for repression of E2F target genes. In S phase, the complex selectively binds to the promoters of G2/M genes whose products are required for mitosis and participates in their cell cycle dependent activation. In the complex, acts as a DNA-binding protein that binds the promoter of CDK1 in a sequence-specific manner. Specifically recognizes the consensus motif 5'-TTYRAA-3' in target DNA. The sequence is that of Protein lin-54 homolog (Lin54) from Rattus norvegicus (Rat).